A 186-amino-acid polypeptide reads, in one-letter code: ADP-ribosylation factor-like protein alp41 (186 aa).

A lipid anchor (N-myristoyl glycine) is attached at glycine 2. GTP is bound by residues 23-30 (GLDNAGKT), 66-70 (DIGGQ), and 125-128 (NKSD).

This sequence belongs to the small GTPase superfamily. Arf family.

The protein resides in the cytoplasm. It is found in the cytoskeleton. Its function is as follows. Has a role in the cofactor-dependent pathway of microtubule biogenesis. Required for growth polarity control. This is ADP-ribosylation factor-like protein alp41 (alp41) from Schizosaccharomyces pombe (strain 972 / ATCC 24843) (Fission yeast).